The primary structure comprises 685 residues: tRNA 5-methylaminomethyl-2-thiouridine biosynthesis bifunctional protein MnmC (685 aa).

Positions 1–272 (MTAEPNKPCQ…MAAILSSATQ (272 aa)) are tRNA (mnm(5)s(2)U34)-methyltransferase. The FAD-dependent cmnm(5)s(2)U34 oxidoreductase stretch occupies residues 278-685 (IGGGLASAHL…LRKLLKGKAL (408 aa)).

In the N-terminal section; belongs to the methyltransferase superfamily. tRNA (mnm(5)s(2)U34)-methyltransferase family. This sequence in the C-terminal section; belongs to the DAO family. FAD is required as a cofactor.

It localises to the cytoplasm. The catalysed reaction is 5-aminomethyl-2-thiouridine(34) in tRNA + S-adenosyl-L-methionine = 5-methylaminomethyl-2-thiouridine(34) in tRNA + S-adenosyl-L-homocysteine + H(+). Its function is as follows. Catalyzes the last two steps in the biosynthesis of 5-methylaminomethyl-2-thiouridine (mnm(5)s(2)U) at the wobble position (U34) in tRNA. Catalyzes the FAD-dependent demodification of cmnm(5)s(2)U34 to nm(5)s(2)U34, followed by the transfer of a methyl group from S-adenosyl-L-methionine to nm(5)s(2)U34, to form mnm(5)s(2)U34. The protein is tRNA 5-methylaminomethyl-2-thiouridine biosynthesis bifunctional protein MnmC of Shewanella baltica (strain OS185).